Consider the following 654-residue polypeptide: Acetyl-coenzyme A synthetase (654 aa).

CoA contacts are provided by residues 190–193 (RGGK) and Thr-313. ATP contacts are provided by residues 389–391 (GEP), 413–418 (DTWWQT), Asp-504, and Arg-519. Ser-527 lines the CoA pocket. ATP is bound at residue Arg-530. The Mg(2+) site is built by Val-541, His-543, and Val-546. Lys-613 is subject to N6-acetyllysine.

The protein belongs to the ATP-dependent AMP-binding enzyme family. Mg(2+) serves as cofactor. In terms of processing, acetylated. Deacetylation by the SIR2-homolog deacetylase activates the enzyme.

The catalysed reaction is acetate + ATP + CoA = acetyl-CoA + AMP + diphosphate. Functionally, catalyzes the conversion of acetate into acetyl-CoA (AcCoA), an essential intermediate at the junction of anabolic and catabolic pathways. AcsA undergoes a two-step reaction. In the first half reaction, AcsA combines acetate with ATP to form acetyl-adenylate (AcAMP) intermediate. In the second half reaction, it can then transfer the acetyl group from AcAMP to the sulfhydryl group of CoA, forming the product AcCoA. The sequence is that of Acetyl-coenzyme A synthetase from Leptospira biflexa serovar Patoc (strain Patoc 1 / Ames).